The sequence spans 95 residues: uncharacterized protein (95 aa).

A helical membrane pass occupies residues 45 to 65; it reads WLSGLAFVLQAALVMPVVLAF.

Its subcellular location is the membrane. This is an uncharacterized protein from Mycobacterium leprae (strain TN).